Consider the following 609-residue polypeptide: NADH-ubiquinone oxidoreductase chain 5 (609 aa).

The next 16 helical transmembrane spans lie at valine 3 to valine 23, threonine 41 to glycine 61, methionine 90 to tyrosine 110, proline 115 to valine 135, leucine 140 to tryptophan 160, alanine 174 to isoleucine 194, valine 214 to leucine 236, threonine 244 to isoleucine 264, methionine 276 to leucine 296, isoleucine 304 to asparagine 323, alanine 328 to isoleucine 350, valine 368 to phenylalanine 388, tryptophan 410 to phenylalanine 432, leucine 460 to threonine 480, leucine 491 to serine 511, and glycine 585 to isoleucine 605.

Belongs to the complex I subunit 5 family. Core subunit of respiratory chain NADH dehydrogenase (Complex I) which is composed of 45 different subunits.

It localises to the mitochondrion inner membrane. The catalysed reaction is a ubiquinone + NADH + 5 H(+)(in) = a ubiquinol + NAD(+) + 4 H(+)(out). Core subunit of the mitochondrial membrane respiratory chain NADH dehydrogenase (Complex I) which catalyzes electron transfer from NADH through the respiratory chain, using ubiquinone as an electron acceptor. Essential for the catalytic activity and assembly of complex I. In Halichoerus grypus (Gray seal), this protein is NADH-ubiquinone oxidoreductase chain 5 (MT-ND5).